The chain runs to 360 residues: Hydroxycarboxylic acid receptor 2 (360 aa).

Residues M1–V30 are Extracellular-facing. A helical membrane pass occupies residues L31–F51. The Cytoplasmic segment spans residues H52–R60. Residues I61–T81 form a helical membrane-spanning segment. Residues D82–R98 lie on the Extracellular side of the membrane. An intrachain disulfide couples C97 to C174. A helical transmembrane segment spans residues V99–A119. The Cytoplasmic segment spans residues V120 to T140. Residues A141–Y161 traverse the membrane as a helical segment. Residues T162 to M189 lie on the Extracellular side of the membrane. Residues F190–W210 traverse the membrane as a helical segment. Topologically, residues S211 to A226 are cytoplasmic. Residues I227–V247 traverse the membrane as a helical segment. Residues R248 to D270 lie on the Extracellular side of the membrane. The helical transmembrane segment at L271–Y291 threads the bilayer. Over Y292–R360 the chain is Cytoplasmic. The segment at N320–R360 is disordered. Over residues N321 to R336 the composition is skewed to polar residues. S325 bears the Phosphoserine mark.

This sequence belongs to the G-protein coupled receptor 1 family. Expressed in adipose tissue, lung and spleen.

Its subcellular location is the cell membrane. Its function is as follows. Acts as a high affinity receptor for both nicotinic acid (also known as niacin) and (D)-beta-hydroxybutyrate and mediates increased adiponectin secretion and decreased lipolysis through G(i)-protein-mediated inhibition of adenylyl cyclase. This pharmacological effect requires nicotinic acid doses that are much higher than those provided by a normal diet. Mediates nicotinic acid-induced apoptosis in mature neutrophils. Receptor activation by nicotinic acid results in reduced cAMP levels which may affect activity of cAMP-dependent protein kinase A and phosphorylation of target proteins, leading to neutrophil apoptosis. The rank order of potency for the displacement of nicotinic acid binding is 5-methyl pyrazole-3-carboxylic acid = pyridine-3-acetic acid &gt; acifran &gt; 5-methyl nicotinic acid = acipimox &gt;&gt; nicotinuric acid = nicotinamide. The protein is Hydroxycarboxylic acid receptor 2 (Hcar2) of Rattus norvegicus (Rat).